The chain runs to 551 residues: Probable aldehyde dehydrogenase (551 aa).

278–283 lines the NAD(+) pocket; sequence GSSRVA. E297 serves as the catalytic Proton acceptor. The active-site Nucleophile is the C332.

The protein belongs to the aldehyde dehydrogenase family. As to expression, in uninfected plants, highest levels found in stems. In plants infected with the flax rust, highest levels in leaves. Higher levels of expression in infected leaves than uninfected stems.

The catalysed reaction is an aldehyde + NAD(+) + H2O = a carboxylate + NADH + 2 H(+). Functionally, could be involved in facilitating the biotrophic relationship between the plant and the rust fungus. The protein is Probable aldehyde dehydrogenase (FIS1) of Linum usitatissimum (Flax).